We begin with the raw amino-acid sequence, 358 residues long: Serine/threonine-protein phosphatase 2A activator 2 (358 aa).

This sequence belongs to the PTPA-type PPIase family.

It is found in the cytoplasm. It carries out the reaction [protein]-peptidylproline (omega=180) = [protein]-peptidylproline (omega=0). Functionally, PPIases accelerate the folding of proteins. It catalyzes the cis-trans isomerization of proline imidic peptide bonds in oligopeptides. Acts as a regulatory subunit for PP2A-like phosphatases modulating their activity or substrate specificity, probably by inducing a conformational change in the catalytic subunit, a direct target of the PPIase. Can reactivate inactive phosphatase PP2A-phosphatase methylesterase complexes (PP2Ai) in presence of ATP and Mg(2+) by dissociating the inactive form from the complex. The polypeptide is Serine/threonine-protein phosphatase 2A activator 2 (RRD2) (Candida glabrata (strain ATCC 2001 / BCRC 20586 / JCM 3761 / NBRC 0622 / NRRL Y-65 / CBS 138) (Yeast)).